The primary structure comprises 301 residues: Putative two-component membrane permease complex subunit SMU_747c (301 aa).

The next 8 membrane-spanning stretches (helical) occupy residues 15–35 (LAIFLSIIIEALPFILLGAIL), 60–80 (ILFGTFVGFIFPSCECGIVPI), 97–117 (FLATAPIINPIVLFATFSAFG), 124–144 (FLRLFGAIIVAISLGILLGFI), 188–208 (YLIFGSFVAASMQIYVPTRIL), 211–231 (IGHNPLTAILIMMLLAFILSL), 238–258 (FIGTSLLATFGVAPVVAFLLI), and 278–298 (FILQFVGTSSLIIIIYCLIVG).

It belongs to the UPF0718 family. Interacts with SMU_746c.

The protein resides in the cell membrane. In terms of biological role, could be part of a two-component membrane permease system responsible for amino acid transport under low pH. Involved in acidogenesis, biofilm formation and low-pH survival. The sequence is that of Putative two-component membrane permease complex subunit SMU_747c from Streptococcus mutans serotype c (strain ATCC 700610 / UA159).